The chain runs to 154 residues: MKAVLQRVAEARVVVAGETVGRIGQGLLVLVCAERGDSEAQADKLLAKILKLRIFSDDAGKMNRSVQDLDGQGACGGLLVVSQFTLAADASGGNRPSFTGAAPPDVGRRLYDYFVAQARKLHPQVETGQFAADMQVHLVNDGPVTIPLHIAPDA.

The Gly-cisPro motif, important for rejection of L-amino acids motif lies at 142-143 (GP).

The protein belongs to the DTD family. Homodimer.

It is found in the cytoplasm. It catalyses the reaction glycyl-tRNA(Ala) + H2O = tRNA(Ala) + glycine + H(+). The catalysed reaction is a D-aminoacyl-tRNA + H2O = a tRNA + a D-alpha-amino acid + H(+). Functionally, an aminoacyl-tRNA editing enzyme that deacylates mischarged D-aminoacyl-tRNAs. Also deacylates mischarged glycyl-tRNA(Ala), protecting cells against glycine mischarging by AlaRS. Acts via tRNA-based rather than protein-based catalysis; rejects L-amino acids rather than detecting D-amino acids in the active site. By recycling D-aminoacyl-tRNA to D-amino acids and free tRNA molecules, this enzyme counteracts the toxicity associated with the formation of D-aminoacyl-tRNA entities in vivo and helps enforce protein L-homochirality. In Polaromonas naphthalenivorans (strain CJ2), this protein is D-aminoacyl-tRNA deacylase.